Consider the following 66-residue polypeptide: DNA gyrase inhibitor YacG (66 aa).

Residues C9, C12, C28, and C32 each contribute to the Zn(2+) site.

It belongs to the DNA gyrase inhibitor YacG family. As to quaternary structure, interacts with GyrB. Zn(2+) is required as a cofactor.

Functionally, inhibits all the catalytic activities of DNA gyrase by preventing its interaction with DNA. Acts by binding directly to the C-terminal domain of GyrB, which probably disrupts DNA binding by the gyrase. The sequence is that of DNA gyrase inhibitor YacG from Pseudomonas aeruginosa (strain LESB58).